Here is a 783-residue protein sequence, read N- to C-terminus: Cilia- and flagella-associated protein 91 (783 aa).

Residues 748-760 (EDFELEEEAESLD) show a composition bias toward acidic residues. The disordered stretch occupies residues 748-783 (EDFELEEEAESLDSEVPTVSVSKTSTIKPTQDEGEG). Over residues 764-776 (PTVSVSKTSTIKP) the composition is skewed to polar residues.

Belongs to the CFAP91 family. As to quaternary structure, part of a complex containing MYCBP, AKAP1 and PRKAR2B. Interacts with MYCBP and AKAP1. Interacts with CFAP61. Phosphorylated by PKA. In terms of tissue distribution, expressed in the testis, in cells involved in spermatogenesis.

It localises to the cytoplasm. Its subcellular location is the mitochondrion. The protein resides in the cytoskeleton. The protein localises to the cilium axoneme. Involved in sperm flagellum axonemal organization and function. May regulate cilium motility through its role in the assembly of the axonemal radial spokes. The protein is Cilia- and flagella-associated protein 91 of Mus musculus (Mouse).